Consider the following 150-residue polypeptide: Peptide deformylase (150 aa).

2 residues coordinate Fe cation: Cys88 and His130. Glu131 is an active-site residue. Residue His134 participates in Fe cation binding.

It belongs to the polypeptide deformylase family. Fe(2+) serves as cofactor.

It carries out the reaction N-terminal N-formyl-L-methionyl-[peptide] + H2O = N-terminal L-methionyl-[peptide] + formate. Its function is as follows. Removes the formyl group from the N-terminal Met of newly synthesized proteins. Requires at least a dipeptide for an efficient rate of reaction. N-terminal L-methionine is a prerequisite for activity but the enzyme has broad specificity at other positions. The sequence is that of Peptide deformylase from Desulfitobacterium hafniense (strain Y51).